A 102-amino-acid chain; its full sequence is Protein Tat (102 aa).

The segment at 1 to 24 is interaction with human CREBBP; it reads MEPVDPRLEPWKHPGSQPKTACNN. The segment at 1–48 is transactivation; that stretch reads MEPVDPRLEPWKHPGSQPKTACNNCYCKKCCYHCQVCFLTKGLGISYG. Cysteine 22, cysteine 25, and cysteine 27 together coordinate Zn(2+). Residues 22–37 form a cysteine-rich region; that stretch reads CNNCYCKKCCYHCQVC. Position 28 is an N6-acetyllysine; by host PCAF (lysine 28). Residues cysteine 30, histidine 33, cysteine 34, and cysteine 37 each contribute to the Zn(2+) site. The segment at 38-48 is core; the sequence is FLTKGLGISYG. A disordered region spans residues 48-102; sequence GRKKRRQRRGPPQGSQTHQVSLSKQPTSQPRGDPTGPKESKEKVERETETDPAVQ. A Nuclear localization signal, RNA-binding (TAR), and protein transduction motif is present at residues 49-57; sequence RKKRRQRRG. Residues 49 to 86 are interaction with the host capping enzyme RNGTT; that stretch reads RKKRRQRRGPPQGSQTHQVSLSKQPTSQPRGDPTGPKE. N6-acetyllysine; by host EP300 and GCN5L2 occurs at positions 50 and 51. Asymmetric dimethylarginine; by host PRMT6 is present on residues arginine 52 and arginine 53. A compositionally biased stretch (polar residues) spans 62 to 77; sequence SQTHQVSLSKQPTSQP. Lysine 71 is covalently cross-linked (Glycyl lysine isopeptide (Lys-Gly) (interchain with G-Cter in ubiquitin)). The Cell attachment site signature appears at 78–80; that stretch reads RGD. Over residues 83 to 96 the composition is skewed to basic and acidic residues; it reads GPKESKEKVERETE.

It belongs to the lentiviruses Tat family. As to quaternary structure, interacts with host CCNT1. Associates with the P-TEFb complex composed at least of Tat, P-TEFb (CDK9 and CCNT1), TAR RNA, RNA Pol II. Recruits the HATs CREBBP, TAF1/TFIID, EP300, PCAF and GCN5L2. Interacts with host KAT5/Tip60; this interaction targets the latter to degradation. Interacts with the host deacetylase SIRT1. Interacts with host capping enzyme RNGTT; this interaction stimulates RNGTT. Binds to host KDR, and to the host integrins ITGAV/ITGB3 and ITGA5/ITGB1. Interacts with host KPNB1/importin beta-1 without previous binding to KPNA1/importin alpha-1. Interacts with EIF2AK2. Interacts with host nucleosome assembly protein NAP1L1; this interaction may be required for the transport of Tat within the nucleus, since the two proteins interact at the nuclear rim. Interacts with host C1QBP/SF2P32; this interaction involves lysine-acetylated Tat. Interacts with the host chemokine receptors CCR2, CCR3 and CXCR4. Interacts with host DPP4/CD26; this interaction may trigger an anti-proliferative effect. Interacts with host LDLR. Interacts with the host extracellular matrix metalloproteinase MMP1. Interacts with host PRMT6; this interaction mediates Tat's methylation. Interacts with, and is ubiquitinated by MDM2/Hdm2. Interacts with host PSMC3 and HTATIP2. Interacts with STAB1; this interaction may overcome SATB1-mediated repression of IL2 and IL2RA (interleukin) in T cells by binding to the same domain than HDAC1. Interacts (when acetylated) with human CDK13, thereby increasing HIV-1 mRNA splicing and promoting the production of the doubly spliced HIV-1 protein Nef. Interacts with host TBP; this interaction modulates the activity of transcriptional pre-initiation complex. Interacts with host RELA. Interacts with host PLSCR1; this interaction negatively regulates Tat transactivation activity by altering its subcellular distribution. Asymmetrical arginine methylation by host PRMT6 seems to diminish the transactivation capacity of Tat and affects the interaction with host CCNT1. Post-translationally, acetylation by EP300, CREBBP, GCN5L2/GCN5 and PCAF regulates the transactivation activity of Tat. EP300-mediated acetylation of Lys-50 promotes dissociation of Tat from the TAR RNA through the competitive binding to PCAF's bromodomain. In addition, the non-acetylated Tat's N-terminus can also interact with PCAF. PCAF-mediated acetylation of Lys-28 enhances Tat's binding to CCNT1. Lys-50 is deacetylated by SIRT1. In terms of processing, polyubiquitination by host MDM2 does not target Tat to degradation, but activates its transactivation function and fosters interaction with CCNT1 and TAR RNA. Phosphorylated by EIF2AK2 on serine and threonine residues adjacent to the basic region important for TAR RNA binding and function. Phosphorylation of Tat by EIF2AK2 is dependent on the prior activation of EIF2AK2 by dsRNA.

The protein resides in the host nucleus. Its subcellular location is the host nucleolus. The protein localises to the host cytoplasm. It is found in the secreted. Functionally, transcriptional activator that increases RNA Pol II processivity, thereby increasing the level of full-length viral transcripts. Recognizes a hairpin structure at the 5'-LTR of the nascent viral mRNAs referred to as the transactivation responsive RNA element (TAR) and recruits the cyclin T1-CDK9 complex (P-TEFb complex) that will in turn hyperphosphorylate the RNA polymerase II to allow efficient elongation. The CDK9 component of P-TEFb and other Tat-activated kinases hyperphosphorylate the C-terminus of RNA Pol II that becomes stabilized and much more processive. Other factors such as HTATSF1/Tat-SF1, SUPT5H/SPT5, and HTATIP2 are also important for Tat's function. Besides its effect on RNA Pol II processivity, Tat induces chromatin remodeling of proviral genes by recruiting the histone acetyltransferases (HATs) CREBBP, EP300 and PCAF to the chromatin. This also contributes to the increase in proviral transcription rate, especially when the provirus integrates in transcriptionally silent region of the host genome. To ensure maximal activation of the LTR, Tat mediates nuclear translocation of NF-kappa-B by interacting with host RELA. Through its interaction with host TBP, Tat may also modulate transcription initiation. Tat can reactivate a latently infected cell by penetrating in it and transactivating its LTR promoter. In the cytoplasm, Tat is thought to act as a translational activator of HIV-1 mRNAs. Its function is as follows. Extracellular circulating Tat can be endocytosed by surrounding uninfected cells via the binding to several surface receptors such as CD26, CXCR4, heparan sulfate proteoglycans (HSPG) or LDLR. Neurons are rarely infected, but they internalize Tat via their LDLR. Through its interaction with nuclear HATs, Tat is potentially able to control the acetylation-dependent cellular gene expression. Modulates the expression of many cellular genes involved in cell survival, proliferation or in coding for cytokines or cytokine receptors. Tat plays a role in T-cell and neurons apoptosis. Tat induced neurotoxicity and apoptosis probably contribute to neuroAIDS. Circulating Tat also acts as a chemokine-like and/or growth factor-like molecule that binds to specific receptors on the surface of the cells, affecting many cellular pathways. In the vascular system, Tat binds to ITGAV/ITGB3 and ITGA5/ITGB1 integrins dimers at the surface of endothelial cells and competes with bFGF for heparin-binding sites, leading to an excess of soluble bFGF. The chain is Protein Tat from Human immunodeficiency virus type 1 group M subtype B (isolate RF/HAT3) (HIV-1).